A 555-amino-acid polypeptide reads, in one-letter code: Glutamine--tRNA ligase (555 aa).

A 'HIGH' region motif is present at residues 34–44 (PEPNGYLHIGH). ATP-binding positions include 35-37 (EPN) and 41-47 (HIGHAKS). L-glutamine is bound by residues Asp67 and Tyr212. ATP contacts are provided by residues Thr231, 261-262 (RL), and 269-271 (MSK). The 'KMSKS' region signature appears at 268–272 (VMSKR). The segment at 317–324 (TKQDNTIE) is interaction with tRNA.

The protein belongs to the class-I aminoacyl-tRNA synthetase family. Monomer.

The protein resides in the cytoplasm. It catalyses the reaction tRNA(Gln) + L-glutamine + ATP = L-glutaminyl-tRNA(Gln) + AMP + diphosphate. The polypeptide is Glutamine--tRNA ligase (Salmonella choleraesuis (strain SC-B67)).